Reading from the N-terminus, the 128-residue chain is UPF0325 protein PMI2289 (128 aa).

This sequence belongs to the UPF0325 family.

The chain is UPF0325 protein PMI2289 from Proteus mirabilis (strain HI4320).